The chain runs to 174 residues: dCTP deaminase, dUMP-forming (174 aa).

Residues 93-98 (RSSIGR), Asp111, 119-121 (TLE), Gln138, and Tyr151 contribute to the dCTP site. The Proton donor/acceptor role is filled by Glu121.

The protein belongs to the dCTP deaminase family. In terms of assembly, homotrimer.

It carries out the reaction dCTP + 2 H2O = dUMP + NH4(+) + diphosphate. It functions in the pathway pyrimidine metabolism; dUMP biosynthesis; dUMP from dCTP: step 1/1. In terms of biological role, bifunctional enzyme that catalyzes both the deamination of dCTP to dUTP and the hydrolysis of dUTP to dUMP without releasing the toxic dUTP intermediate. The protein is dCTP deaminase, dUMP-forming of Leptospira biflexa serovar Patoc (strain Patoc 1 / Ames).